Reading from the N-terminus, the 294-residue chain is Elongation factor Ts (294 aa).

Residues 80 to 83 are involved in Mg(2+) ion dislocation from EF-Tu; that stretch reads TDFV.

Belongs to the EF-Ts family.

It is found in the cytoplasm. Its function is as follows. Associates with the EF-Tu.GDP complex and induces the exchange of GDP to GTP. It remains bound to the aminoacyl-tRNA.EF-Tu.GTP complex up to the GTP hydrolysis stage on the ribosome. The sequence is that of Elongation factor Ts from Polynucleobacter asymbioticus (strain DSM 18221 / CIP 109841 / QLW-P1DMWA-1) (Polynucleobacter necessarius subsp. asymbioticus).